We begin with the raw amino-acid sequence, 153 residues long: UPF0266 membrane protein YE1773 (153 aa).

Helical transmembrane passes span Ile6–Met26, Ile45–Asn65, and Glu67–Ile87.

It belongs to the UPF0266 family.

Its subcellular location is the cell inner membrane. This Yersinia enterocolitica serotype O:8 / biotype 1B (strain NCTC 13174 / 8081) protein is UPF0266 membrane protein YE1773.